The sequence spans 113 residues: Prefoldin subunit beta (113 aa).

It belongs to the prefoldin subunit beta family. Heterohexamer of two alpha and four beta subunits.

It is found in the cytoplasm. Functionally, molecular chaperone capable of stabilizing a range of proteins. Seems to fulfill an ATP-independent, HSP70-like function in archaeal de novo protein folding. This is Prefoldin subunit beta from Methanococcus maripaludis (strain DSM 14266 / JCM 13030 / NBRC 101832 / S2 / LL).